The following is a 218-amino-acid chain: Ribonuclease HII (218 aa).

One can recognise an RNase H type-2 domain in the interval 23 to 216 (RFLCGVDEAG…VREAIARGLV (194 aa)). Positions 29, 30, and 125 each coordinate a divalent metal cation.

This sequence belongs to the RNase HII family. Mn(2+) is required as a cofactor. Mg(2+) serves as cofactor.

Its subcellular location is the cytoplasm. The enzyme catalyses Endonucleolytic cleavage to 5'-phosphomonoester.. Its function is as follows. Endonuclease that specifically degrades the RNA of RNA-DNA hybrids. This is Ribonuclease HII from Cupriavidus pinatubonensis (strain JMP 134 / LMG 1197) (Cupriavidus necator (strain JMP 134)).